The sequence spans 60 residues: ATP synthase subunit J, mitochondrial (60 aa).

A helical membrane pass occupies residues 13-32 (ILKPMLPFFLGGAIVFYGTV).

Belongs to the ATPase j subunit family. As to quaternary structure, F-type ATPases have 2 components, CF(1) - the catalytic core - and CF(0) - the membrane proton channel. In yeast, the dimeric form of ATP synthase consists of 17 polypeptides: alpha, beta, gamma, delta, epsilon, 4 (B), 5 (OSCP), 6 (A), 8, 9 (C), d, E (Tim11), f, g, h, i/j and k.

It is found in the mitochondrion membrane. In terms of biological role, mitochondrial membrane ATP synthase (F(1)F(0) ATP synthase or Complex V) produces ATP from ADP in the presence of a proton gradient across the membrane which is generated by electron transport complexes of the respiratory chain. F-type ATPases consist of two structural domains, F(1) - containing the extramembraneous catalytic core and F(0) - containing the membrane proton channel, linked together by a central stalk and a peripheral stalk. During catalysis, ATP synthesis in the catalytic domain of F(1) is coupled via a rotary mechanism of the central stalk subunits to proton translocation. Part of the complex F(0) domain. Minor subunit located with subunit a in the membrane. The protein is ATP synthase subunit J, mitochondrial (atp18) of Schizosaccharomyces pombe (strain 972 / ATCC 24843) (Fission yeast).